Here is a 450-residue protein sequence, read N- to C-terminus: MREIISIHIGQAGIQVGNACWELYCLEHGINQDGTMPSDTTVGVAHDAFNTFFSETGAGKHVPRAIFVDLEPTVIDEVRTGAYRQLFHPEQLISGKEDAANNFARGHYTVGKEIVDLCLDRVRKLADNCTGLQGFLVFNAVGGGTGSGLGSLLLERLSVDYGKKSKLGFTIYPSPQVSTAVVEPYNSVLSTHSLLEHTDVAVLLDNEAIYDICRRSLDIERPTYTNLNRLISQIISSLTTSLRFDGAINVDVTEFQTNLVPYPRIHFMLSSYAPVISAEKAYHEQLSVPEITNAVFEPSSMMAKCDPRHGKYMACCLMYRGDVVPKDVNAAVATIKTKRTVQFVDWCPTGFKCGINYQPPSVVPGGDLAKVQRAVCMISNNTAVAEVFSRIDHKFDLMYAKRAFVHWYVGEGMEEGEFSEAREDLAALEKDYEEVGAEGADDEGDEGDDY.

Residues Gln-11, Glu-71, Gly-144, Thr-145, Thr-179, Asn-206, and Asn-228 each coordinate GTP. Glu-71 serves as a coordination point for Mg(2+). Residue Glu-254 is part of the active site.

Belongs to the tubulin family. In terms of assembly, dimer of alpha and beta chains. A typical microtubule is a hollow water-filled tube with an outer diameter of 25 nm and an inner diameter of 15 nM. Alpha-beta heterodimers associate head-to-tail to form protofilaments running lengthwise along the microtubule wall with the beta-tubulin subunit facing the microtubule plus end conferring a structural polarity. Microtubules usually have 13 protofilaments but different protofilament numbers can be found in some organisms and specialized cells. Requires Mg(2+) as cofactor. In terms of processing, undergoes a tyrosination/detyrosination cycle, the cyclic removal and re-addition of a C-terminal tyrosine residue by the enzymes tubulin tyrosine carboxypeptidase (TTCP) and tubulin tyrosine ligase (TTL), respectively.

Its subcellular location is the cytoplasm. The protein localises to the cytoskeleton. The enzyme catalyses GTP + H2O = GDP + phosphate + H(+). Tubulin is the major constituent of microtubules, a cylinder consisting of laterally associated linear protofilaments composed of alpha- and beta-tubulin heterodimers. Microtubules grow by the addition of GTP-tubulin dimers to the microtubule end, where a stabilizing cap forms. Below the cap, tubulin dimers are in GDP-bound state, owing to GTPase activity of alpha-tubulin. This Hordeum vulgare (Barley) protein is Tubulin alpha-1 chain (TUBA1).